The following is a 284-amino-acid chain: Tropomyosin (284 aa).

The segment at M1–Q47 is disordered. Residues M1–Y284 are a coiled coil. Residues K12–K38 show a composition bias toward basic and acidic residues.

The protein belongs to the tropomyosin family.

Functionally, tropomyosin, in association with the troponin complex, plays a central role in the calcium dependent regulation of muscle contraction. In Trichinella spiralis (Trichina worm), this protein is Tropomyosin.